We begin with the raw amino-acid sequence, 90 residues long: Small ribosomal subunit protein uS15c (90 aa).

In terms of assembly, component of the chloroplast small ribosomal subunit (SSU). Mature 70S chloroplast ribosomes of higher plants consist of a small (30S) and a large (50S) subunit. The 30S small subunit contains 1 molecule of ribosomal RNA (16S rRNA) and 24 different proteins. The 50S large subunit contains 3 rRNA molecules (23S, 5S and 4.5S rRNA) and 33 different proteins.

The protein localises to the plastid. It is found in the chloroplast. Functionally, component of the chloroplast ribosome (chloro-ribosome), a dedicated translation machinery responsible for the synthesis of chloroplast genome-encoded proteins, including proteins of the transcription and translation machinery and components of the photosynthetic apparatus. This Spinacia oleracea (Spinach) protein is Small ribosomal subunit protein uS15c (rps15).